A 244-amino-acid chain; its full sequence is Ribosomal RNA large subunit methyltransferase E (244 aa).

S-adenosyl-L-methionine-binding residues include glycine 81, tryptophan 83, aspartate 109, aspartate 125, and aspartate 149. The active-site Proton acceptor is lysine 189.

The protein belongs to the class I-like SAM-binding methyltransferase superfamily. RNA methyltransferase RlmE family.

It localises to the cytoplasm. The catalysed reaction is uridine(2552) in 23S rRNA + S-adenosyl-L-methionine = 2'-O-methyluridine(2552) in 23S rRNA + S-adenosyl-L-homocysteine + H(+). Its function is as follows. Specifically methylates the uridine in position 2552 of 23S rRNA at the 2'-O position of the ribose in the fully assembled 50S ribosomal subunit. In Cereibacter sphaeroides (strain ATCC 17023 / DSM 158 / JCM 6121 / CCUG 31486 / LMG 2827 / NBRC 12203 / NCIMB 8253 / ATH 2.4.1.) (Rhodobacter sphaeroides), this protein is Ribosomal RNA large subunit methyltransferase E.